Here is a 26-residue protein sequence, read N- to C-terminus: Glycyl-poneratoxin (26 aa).

Arginine 25 is modified (arginine amide; in delta-paraponeritoxin-Pc1a).

In terms of processing, the glycine-PoTx is a non-amidated form of poneratoxin, with an extra-Gly at C-terminus. This loss of amidation does not alter toxin activity on Nav1.7/SCN9A. As to expression, expressed by the venom gland.

Its subcellular location is the secreted. Its function is as follows. Toxin that causes pain in vertebrates by targeting tetrodotoxin (TTX)-sensitive sodium channels in peripheral sensory neurons. Also blocks synaptic transmission and stimulates smooth muscle contraction. Converts the normally rapidly activating and inactivating sodium channel current into one that does not inactivate. Is active on both Nav1.6/SCN8A and Nav1.7/SCN9A sodium channels, with a much potent activity on Nav1.6/SCN8A (EC(50)=97 nM on human channels) than on Nav1.7/SCN9A (EC(50)=2.3 uM on human and EC(50)=1.8 uM on mouse channels). On these channels, causes a sustained current, a reduction in peak current amplitude and a hyperpolarising shift. Modulates Nav1.7/SCN9A in a non-competitive manner with TTX or tetracaine. Toxin-induced persistant current is very slowly reversible with repeated wash steps over 30 minutes. In vivo, shallow intraplantar injection in mice causes immediate, long-lasting and near-maximal nocifensive behaviors, which decrease with coinjection of TTX. When tested on insects, causes paralysis but not mortality at high doses. The protein is Glycyl-poneratoxin of Paraponera clavata (Bullet ant).